We begin with the raw amino-acid sequence, 408 residues long: Bifunctional enzyme IspD/IspF (408 aa).

The 2-C-methyl-D-erythritol 4-phosphate cytidylyltransferase stretch occupies residues methionine 1–isoleucine 247. The segment at arginine 248–asparagine 408 is 2-C-methyl-D-erythritol 2,4-cyclodiphosphate synthase. The a divalent metal cation site is built by aspartate 254 and histidine 256. Residues aspartate 254–histidine 256 and histidine 280–serine 281 contribute to the 4-CDP-2-C-methyl-D-erythritol 2-phosphate site. An a divalent metal cation-binding site is contributed by histidine 288. Residues aspartate 302–glycine 304, threonine 378–glutamate 381, phenylalanine 385, and arginine 388 contribute to the 4-CDP-2-C-methyl-D-erythritol 2-phosphate site.

It in the N-terminal section; belongs to the IspD/TarI cytidylyltransferase family. IspD subfamily. This sequence in the C-terminal section; belongs to the IspF family. It depends on a divalent metal cation as a cofactor.

It carries out the reaction 2-C-methyl-D-erythritol 4-phosphate + CTP + H(+) = 4-CDP-2-C-methyl-D-erythritol + diphosphate. It catalyses the reaction 4-CDP-2-C-methyl-D-erythritol 2-phosphate = 2-C-methyl-D-erythritol 2,4-cyclic diphosphate + CMP. It functions in the pathway isoprenoid biosynthesis; isopentenyl diphosphate biosynthesis via DXP pathway; isopentenyl diphosphate from 1-deoxy-D-xylulose 5-phosphate: step 2/6. The protein operates within isoprenoid biosynthesis; isopentenyl diphosphate biosynthesis via DXP pathway; isopentenyl diphosphate from 1-deoxy-D-xylulose 5-phosphate: step 4/6. Bifunctional enzyme that catalyzes the formation of 4-diphosphocytidyl-2-C-methyl-D-erythritol from CTP and 2-C-methyl-D-erythritol 4-phosphate (MEP) (IspD), and catalyzes the conversion of 4-diphosphocytidyl-2-C-methyl-D-erythritol 2-phosphate (CDP-ME2P) to 2-C-methyl-D-erythritol 2,4-cyclodiphosphate (ME-CPP) with a corresponding release of cytidine 5-monophosphate (CMP) (IspF). The protein is Bifunctional enzyme IspD/IspF of Chelativorans sp. (strain BNC1).